We begin with the raw amino-acid sequence, 193 residues long: Potassium-transporting ATPase KdpC subunit (193 aa).

A helical membrane pass occupies residues 14 to 34 (ITFTFLVLCGLVYPLIVTGIA).

This sequence belongs to the KdpC family. The system is composed of three essential subunits: KdpA, KdpB and KdpC.

It localises to the cell membrane. Part of the high-affinity ATP-driven potassium transport (or Kdp) system, which catalyzes the hydrolysis of ATP coupled with the electrogenic transport of potassium into the cytoplasm. This subunit acts as a catalytic chaperone that increases the ATP-binding affinity of the ATP-hydrolyzing subunit KdpB by the formation of a transient KdpB/KdpC/ATP ternary complex. This is Potassium-transporting ATPase KdpC subunit from Bacillus cereus (strain ATCC 10987 / NRS 248).